The chain runs to 260 residues: Pyridoxine 5'-phosphate synthase (260 aa).

N7 and R18 together coordinate 3-amino-2-oxopropyl phosphate. The active-site Proton acceptor is H43. 1-deoxy-D-xylulose 5-phosphate contacts are provided by R45 and H50. The Proton acceptor role is filled by E83. T113 lines the 1-deoxy-D-xylulose 5-phosphate pocket. H208 functions as the Proton donor in the catalytic mechanism. 3-amino-2-oxopropyl phosphate-binding positions include D209 and 230-231 (GH).

Belongs to the PNP synthase family. Homooctamer; tetramer of dimers.

It localises to the cytoplasm. It carries out the reaction 3-amino-2-oxopropyl phosphate + 1-deoxy-D-xylulose 5-phosphate = pyridoxine 5'-phosphate + phosphate + 2 H2O + H(+). It functions in the pathway cofactor biosynthesis; pyridoxine 5'-phosphate biosynthesis; pyridoxine 5'-phosphate from D-erythrose 4-phosphate: step 5/5. Its function is as follows. Catalyzes the complicated ring closure reaction between the two acyclic compounds 1-deoxy-D-xylulose-5-phosphate (DXP) and 3-amino-2-oxopropyl phosphate (1-amino-acetone-3-phosphate or AAP) to form pyridoxine 5'-phosphate (PNP) and inorganic phosphate. The chain is Pyridoxine 5'-phosphate synthase from Leptospira biflexa serovar Patoc (strain Patoc 1 / Ames).